The following is a 103-amino-acid chain: Large ribosomal subunit protein bL21 (103 aa).

This sequence belongs to the bacterial ribosomal protein bL21 family. As to quaternary structure, part of the 50S ribosomal subunit. Contacts protein L20.

Its function is as follows. This protein binds to 23S rRNA in the presence of protein L20. The protein is Large ribosomal subunit protein bL21 of Shewanella sp. (strain ANA-3).